Reading from the N-terminus, the 64-residue chain is Alpha-mammal toxin Lqh2 (64 aa).

In terms of domain architecture, LCN-type CS-alpha/beta spans 2–64 (KDGYIVDDVN…VRTKGPGRCR (63 aa)). Cystine bridges form between C12–C63, C16–C36, C22–C46, and C26–C48. Arginine amide is present on R64.

The protein belongs to the long (4 C-C) scorpion toxin superfamily. Sodium channel inhibitor family. Alpha subfamily. Expressed by the venom gland.

Its subcellular location is the secreted. Its function is as follows. Alpha toxins bind voltage-independently at site-3 of sodium channels (Nav) and inhibit the inactivation of the activated channels, thereby blocking neuronal transmission. The dissociation is voltage-dependent. Is active on mammals and competes for alpha-toxins binding on both mammalian and cockroach sodium channels. The polypeptide is Alpha-mammal toxin Lqh2 (Leiurus hebraeus (Hebrew deathstalker scorpion)).